A 320-amino-acid chain; its full sequence is Cytochrome f (320 aa).

Positions 1–35 are cleaved as a signal peptide; the sequence is MQTRNTFSWIREEITRSISVSLIIYIITRASISSA. 4 residues coordinate heme: Tyr-36, Cys-56, Cys-59, and His-60. A helical membrane pass occupies residues 286–306; the sequence is VQGLLFFLASVVLAQIFLVLK.

It belongs to the cytochrome f family. As to quaternary structure, the 4 large subunits of the cytochrome b6-f complex are cytochrome b6, subunit IV (17 kDa polypeptide, petD), cytochrome f and the Rieske protein, while the 4 small subunits are PetG, PetL, PetM and PetN. The complex functions as a dimer. The cofactor is heme.

Its subcellular location is the plastid. The protein localises to the chloroplast thylakoid membrane. Component of the cytochrome b6-f complex, which mediates electron transfer between photosystem II (PSII) and photosystem I (PSI), cyclic electron flow around PSI, and state transitions. This Draba nemorosa (Woodland whitlowgrass) protein is Cytochrome f.